The chain runs to 306 residues: MGKSRILIIGATGYIGRQVAKASAALGHPTLILVRETTASNPEKAQLLESFKSSGITIVHGSLEDHASLVEAIKKVDVVISTVGGAQIADQLNIIKAIKEVGTIKRFLPTEFGNDVDKTSAVEPAKGLFALKVKIRRAIEAEGIPYTYVSSNCFAGYFLPNLGQPGLTAPPRDKIVIFGDGNAKAVFVKEEDIGTFTIKSVDDPRTLNKTLYLRLPANTFSFNELVALWEKKIGKTLEKVYVPEEQVLKTIAETPFPGNIIISIAHSIFVKGDQTNFEIGDNGVEGSELYPDVKYTTVDEYLNQFV.

NADP(+) is bound by residues 10–16 (GATGYIG), Arg-35, and Lys-44. The active-site Proton acceptor is Lys-132. Residue Arg-136 coordinates NADP(+).

It belongs to the NmrA-type oxidoreductase family. Isoflavone reductase subfamily. As to expression, highly expressed in sclerotesta. Expressed in roots, and two-to-four year stems.

It carries out the reaction (-)-dehydrodiconiferyl alcohol + NADPH + H(+) = (S)-isodihydrodehydrodiconiferyl alcohol + NADP(+). The enzyme catalyses (+)-dehydrodiconiferyl alcohol + NADPH + H(+) = (R)-isodihydrodehydrodiconiferyl alcohol + NADP(+). It catalyses the reaction (2R,3S)-dihydrodehydrodiconiferyl alcohol + NADPH + H(+) = (S)-tetrahydrodehydrodiconiferyl alcohol + NADP(+). The catalysed reaction is (2S,3R)-dihydrodehydrodiconiferyl alcohol + NADPH + H(+) = (R)-tetrahydrodehydrodiconiferyl alcohol + NADP(+). Functionally, oxidoreductase involved in lignan biosynthesis. Catalyzes the NADPH-dependent reduction of phenylcoumaran benzylic ethers. Converts dehydrodiconiferyl alcohol (DDC) to isodihydrodehydrodiconiferyl alcohol (IDDDC), and dihydrodehydrodiconiferyl alcohol (DDDC) to tetrahydrodehydrodiconiferyl alcohol (TDDC). May regulate changes in lignin content and accumulation of flavonoids. This Ginkgo biloba (Ginkgo) protein is Phenylcoumaran benzylic ether reductase IRL1.